The chain runs to 348 residues: MEFFKKTALAALVMGFSGAALALPNITILATGGTIAGGGDSATKSNYTVGKVGVENLVNAVPQLKDIANVKGEQVVNIGSQDMNDNVWLTLAKKINTDCDKTDGFVITHGTDTMEETAYFLDLTVKCDKPVVMVGAMRPSTSMSADGPFNLYNAVVTAADKASANRGVLVVMNDTVLDGRDVTKTNTTDVATFKSVNYGPLGYIHNGKIDYQRTPARKHTSDTPFDVSKLNELPKVGIVYNYANASDLPAKALVDAGYDGIVSAGVGNGNLYKSVFDTLATAAKTGTAVVRSSRVPTGATTQDAEVDDAKYGFVASGTLNPQKARVLLQLALTQTKDPQQIQQIFNQY.

The N-terminal stretch at 1-22 (MEFFKKTALAALVMGFSGAALA) is a signal peptide. Residues 24 to 348 (PNITILATGG…QQIQQIFNQY (325 aa)) form the Asparaginase/glutaminase domain. Residue T34 is the O-isoaspartyl threonine intermediate of the active site. Substrate contacts are provided by residues 80 to 81 (SQ) and 111 to 112 (TD). A disulfide bond links C99 and C127.

The protein belongs to the asparaginase 1 family. As to quaternary structure, homotetramer.

The protein localises to the periplasm. The catalysed reaction is L-asparagine + H2O = L-aspartate + NH4(+). In Escherichia coli (strain K12), this protein is L-asparaginase 2 (ansB).